We begin with the raw amino-acid sequence, 1409 residues long: Inositol hexakisphosphate and diphosphoinositol-pentakisphosphate kinase 1 (1409 aa).

64-65 (KK) contacts substrate. Residues arginine 145, lysine 198, histidine 205, arginine 224, 248–251 (EEFM), and 257–259 (DVK) contribute to the ATP site. 224–225 (RK) is a binding site for substrate. Residues lysine 259 and arginine 273 each coordinate substrate. ATP-binding positions include serine 275, aspartate 320, and 332–334 (DVN). Position 337-340 (337-340 (SFVK)) interacts with substrate. A polyphosphoinositide-binding domain region spans residues 382 to 453 (PTTSGTMMEL…VLDITRLLLA (72 aa)). Positions 891–996 (GVEEEGSAPA…PTEMKQSGLG (106 aa)) are disordered. Phosphoserine is present on residues serine 920 and serine 963. The span at 981–996 (FSSSRPPTEMKQSGLG) shows a compositional bias: polar residues. Serine 1013 and serine 1049 each carry phosphoserine. Positions 1110–1119 (MHSSQASDNP) are enriched in polar residues. The segment at 1110-1183 (MHSSQASDNP…PSLNSHVAEE (74 aa)) is disordered. A phosphoserine mark is found at serine 1121 and serine 1128. Residues 1144 to 1162 (SSGPSSTVSSAGPSSPTTV) show a composition bias toward low complexity. Residues 1163–1178 (DGNSQFGFSDQPSLNS) are compositionally biased toward polar residues.

It belongs to the histidine acid phosphatase family. VIP1 subfamily.

The protein localises to the cytoplasm. It localises to the cytosol. The protein resides in the cell membrane. The enzyme catalyses 1D-myo-inositol hexakisphosphate + ATP = 1-diphospho-1D-myo-inositol 2,3,4,5,6-pentakisphosphate + ADP. It carries out the reaction 5-diphospho-1D-myo-inositol 1,2,3,4,6-pentakisphosphate + ATP + H(+) = 1,5-bis(diphospho)-1D-myo-inositol 2,3,4,6-tetrakisphosphate + ADP. Functionally, bifunctional inositol kinase that acts in concert with the IP6K kinases IP6K1, IP6K2 and IP6K3 to synthesize the diphosphate group-containing inositol pyrophosphates diphosphoinositol pentakisphosphate, PP-InsP5, and bis-diphosphoinositol tetrakisphosphate, (PP)2-InsP4. PP-InsP5 and (PP)2-InsP4, also respectively called InsP7 and InsP8, regulate a variety of cellular processes, including apoptosis, vesicle trafficking, cytoskeletal dynamics, exocytosis, insulin signaling and neutrophil activation. Phosphorylates inositol hexakisphosphate (InsP6) at position 1 to produce PP-InsP5 which is in turn phosphorylated by IP6Ks to produce (PP)2-InsP4. Alternatively, phosphorylates PP-InsP5 at position 1, produced by IP6Ks from InsP6, to produce (PP)2-InsP4. Activated when cells are exposed to hyperosmotic stress. This chain is Inositol hexakisphosphate and diphosphoinositol-pentakisphosphate kinase 1, found in Pongo abelii (Sumatran orangutan).